An 80-amino-acid polypeptide reads, in one-letter code: Inner kinetochore subunit MHF2 (80 aa).

Belongs to the CENP-X/MHF2 family. As to quaternary structure, the MHF histone-fold complex is a heterotetramer of 2 MHF1-MHF2 heterodimers. Together with MPH1/FANCM, forms the FANCM-MHF complex. Component of the inner kinetochore constitutive centromere-associated network (CCAN) (also known as central kinetochore CTF19 complex in yeast), which is composed of at least AME1, CHL4, CNN1, CTF3, CTF19, IML3, MCM16, MCM21, MCM22, MHF1, MHF2, MIF2, NKP1, NKP2, OKP1 and WIP1.

DNA-binding component of a FANCM-MHF complex involved in DNA damage repair and genome maintenance. FANCM-MHF promotes gene conversion at blocked replication forks, probably by reversal of the stalled fork. Component of the kinetochore, a multiprotein complex that assembles on centromeric DNA and attaches chromosomes to spindle microtubules, mediating chromosome segregation and sister chromatid segregation during meiosis and mitosis. Component of the inner kinetochore constitutive centromere-associated network (CCAN), which serves as a structural platform for outer kinetochore assembly. This Saccharomyces cerevisiae (strain ATCC 204508 / S288c) (Baker's yeast) protein is Inner kinetochore subunit MHF2.